We begin with the raw amino-acid sequence, 352 residues long: uncharacterized protein (352 aa).

A run of 8 helical transmembrane segments spans residues 6-26 (FIFLMFISIGILLLLLNIINP), 30-50 (FHIVEWKTIFSLFYLMVIINI), 76-96 (IFLTLFLSSLITNDVSLFVII), 151-171 (EFIINMIPFEIFGILAILPFL), 197-217 (FILVLLCVFGYLNFIYILPLI), 226-246 (VKVDYLFLLTFIFLFVDIEGL), 291-311 (WLPIAYGVNIGGNGTLIASFA), and 330-350 (LIGGIIYIMHLIVLVAYAKIF).

Belongs to the CitM (TC 2.A.11) transporter family.

It localises to the cell membrane. This is an uncharacterized protein from Methanocaldococcus jannaschii (strain ATCC 43067 / DSM 2661 / JAL-1 / JCM 10045 / NBRC 100440) (Methanococcus jannaschii).